Here is a 1433-residue protein sequence, read N- to C-terminus: Gag-Pol polyprotein (1433 aa).

Glycine 2 carries N-myristoyl glycine; by host lipidation. The segment at 7–31 is interaction with Gp41; the sequence is VLTGGKLDAWEKIRLRPGGRKSYKI. Residues 8-43 are interaction with host CALM1; it reads LTGGKLDAWEKIRLRPGGRKSYKIKHLVWASRELER. Residues 12–19 are interaction with host AP3D1; it reads KLDAWEKI. The segment at 14–33 is interaction with membrane phosphatidylinositol 4,5-bisphosphate and RNA; that stretch reads DAWEKIRLRPGGRKSYKIKH. The Nuclear export signal signature appears at 16-22; sequence WEKIRLR. The short motif at 26-32 is the Nuclear localization signal element; it reads RKSYKIK. Residues 73 to 77 form an interaction with membrane phosphatidylinositol 4,5-bisphosphate region; sequence EEIKS. Position 132 is a phosphotyrosine; by host (tyrosine 132). Residues 189 to 227 form an interaction with human PPIA/CYPA and NUP153 region; sequence NTVGGHQAAMQMLKDTINEEAAEWDRMHPQQAGPFPPGQ. Positions 277–363 are dimerization/Multimerization of capsid protein p24; sequence YSPVSILDIR…GGPSHKARVL (87 aa). 2 consecutive CCHC-type zinc fingers follow at residues 391–408 and 412–429; these read IKCF…NCRA and KGCW…DCTE. The span at 445–455 shows a compositional bias: basic and acidic residues; it reads EAREFSSEQDR. The tract at residues 445-481 is disordered; it reads EAREFSSEQDRTNSPTCRKPRVRRGDSPLPEAGDEGK. Residues 487–491 form a dimerization of protease region; that stretch reads PQITL. In terms of domain architecture, Peptidase A2 spans 506–575; it reads IEALLDTGAD…TPINIIGRNM (70 aa). Aspartate 511 serves as the catalytic For protease activity; shared with dimeric partner. Dimerization of protease regions lie at residues 535-541 and 574-586; these read GIGGFIK and NMLT…LNFP. Residues 629 to 819 enclose the Reverse transcriptase domain; that stretch reads EGKISKIGPE…PPFLWMGYEL (191 aa). The Mg(2+) site is built by aspartate 695, aspartate 770, and aspartate 771. The tract at residues 812 to 820 is RT 'primer grip'; that stretch reads FLWMGYELH. The Tryptophan repeat motif signature appears at 983–999; that stretch reads WEIWWTDYWQATWIPEW. Positions 1019–1142 constitute an RNase H type-1 domain; that stretch reads IPGAETYYVD…VDKLVSSGIR (124 aa). The Mg(2+) site is built by aspartate 1028, glutamate 1063, aspartate 1083, and aspartate 1134. The segment at 1148–1189 adopts an Integrase-type zinc-finger fold; the sequence is DGIDKAQEEHERYHNNWRAMASDFNLPPIVAKEIVASCDKCQ. Residues histidine 1157, histidine 1161, cysteine 1185, and cysteine 1188 each coordinate Zn(2+). The Integrase catalytic domain maps to 1199-1349; sequence VDCSPGIWQL…SAGERIIDII (151 aa). 3 residues coordinate Mg(2+): aspartate 1209, aspartate 1261, and glutamate 1297. Positions 1368 to 1415 form a DNA-binding region, integrase-type; sequence FRVYYRDSRDPVWKGPAKLLWKGEGAVVIQDNNEIKVVPRRKAKIIRD.

As to quaternary structure, homotrimer; further assembles as hexamers of trimers. Interacts with gp41 (via C-terminus). Interacts with host CALM1; this interaction induces a conformational change in the Matrix protein, triggering exposure of the myristate group. Interacts with host AP3D1; this interaction allows the polyprotein trafficking to multivesicular bodies during virus assembly. Part of the pre-integration complex (PIC) which is composed of viral genome, matrix protein, Vpr and integrase. In terms of assembly, homodimer; the homodimer further multimerizes as homohexamers or homopentamers. Interacts with human PPIA/CYPA; This interaction stabilizes the capsid. Interacts with human NUP153. Interacts with host PDZD8; this interaction stabilizes the capsid. Interacts with monkey TRIM5; this interaction destabilizes the capsid. Homodimer, whose active site consists of two apposed aspartic acid residues. As to quaternary structure, heterodimer of p66 RT and p51 RT (RT p66/p51). Heterodimerization of RT is essential for DNA polymerase activity. The overall folding of the subdomains is similar in p66 RT and p51 RT but the spatial arrangements of the subdomains are dramatically different. In terms of assembly, homotetramer; may further associate as a homohexadecamer. Part of the pre-integration complex (PIC) which is composed of viral genome, matrix protein, Vpr and integrase. Interacts with human SMARCB1/INI1 and human PSIP1/LEDGF isoform 1. Interacts with human KPNA3; this interaction might play a role in nuclear import of the pre-integration complex. Interacts with human NUP153; this interaction might play a role in nuclear import of the pre-integration complex. Requires Mg(2+) as cofactor. In terms of processing, specific enzymatic cleavages by the viral protease yield mature proteins. The protease is released by autocatalytic cleavage. The polyprotein is cleaved during and after budding, this process is termed maturation. Proteolytic cleavage of p66 RT removes the RNase H domain to yield the p51 RT subunit. Nucleocapsid protein p7 might be further cleaved after virus entry. Tyrosine phosphorylated presumably in the virion by a host kinase. Phosphorylation is apparently not a major regulator of membrane association. Post-translationally, phosphorylated possibly by host MAPK1; this phosphorylation is necessary for Pin1-mediated virion uncoating. In terms of processing, methylated by host PRMT6, impairing its function by reducing RNA annealing and the initiation of reverse transcription.

It is found in the host cell membrane. The protein resides in the host endosome. Its subcellular location is the host multivesicular body. It localises to the virion membrane. The protein localises to the host nucleus. It is found in the host cytoplasm. The protein resides in the virion. The catalysed reaction is Specific for a P1 residue that is hydrophobic, and P1' variable, but often Pro.. The enzyme catalyses Endohydrolysis of RNA in RNA/DNA hybrids. Three different cleavage modes: 1. sequence-specific internal cleavage of RNA. Human immunodeficiency virus type 1 and Moloney murine leukemia virus enzymes prefer to cleave the RNA strand one nucleotide away from the RNA-DNA junction. 2. RNA 5'-end directed cleavage 13-19 nucleotides from the RNA end. 3. DNA 3'-end directed cleavage 15-20 nucleotides away from the primer terminus.. It catalyses the reaction 3'-end directed exonucleolytic cleavage of viral RNA-DNA hybrid.. It carries out the reaction DNA(n) + a 2'-deoxyribonucleoside 5'-triphosphate = DNA(n+1) + diphosphate. Its activity is regulated as follows. Protease: The viral protease is inhibited by many synthetic protease inhibitors (PIs), such as amprenavir, atazanavir, indinavir, loprinavir, nelfinavir, ritonavir and saquinavir. Use of protease inhibitors in tritherapy regimens permit more ambitious therapeutic strategies. Reverse transcriptase/ribonuclease H: RT can be inhibited either by nucleoside RT inhibitors (NRTIs) or by non nucleoside RT inhibitors (NNRTIs). NRTIs act as chain terminators, whereas NNRTIs inhibit DNA polymerization by binding a small hydrophobic pocket near the RT active site and inducing an allosteric change in this region. Classical NRTIs are abacavir, adefovir (PMEA), didanosine (ddI), lamivudine (3TC), stavudine (d4T), tenofovir (PMPA), zalcitabine (ddC), and zidovudine (AZT). Classical NNRTIs are atevirdine (BHAP U-87201E), delavirdine, efavirenz (DMP-266), emivirine (I-EBU), and nevirapine (BI-RG-587). The tritherapies used as a basic effective treatment of AIDS associate two NRTIs and one NNRTI. Mediates, with Gag polyprotein, the essential events in virion assembly, including binding the plasma membrane, making the protein-protein interactions necessary to create spherical particles, recruiting the viral Env proteins, and packaging the genomic RNA via direct interactions with the RNA packaging sequence (Psi). Gag-Pol polyprotein may regulate its own translation, by the binding genomic RNA in the 5'-UTR. At low concentration, the polyprotein would promote translation, whereas at high concentration, the polyprotein would encapsidate genomic RNA and then shut off translation. Functionally, targets the polyprotein to the plasma membrane via a multipartite membrane-binding signal, that includes its myristoylated N-terminus. Matrix protein is part of the pre-integration complex. Implicated in the release from host cell mediated by Vpu. Binds to RNA. In terms of biological role, forms the conical core that encapsulates the genomic RNA-nucleocapsid complex in the virion. Most core are conical, with only 7% tubular. The core is constituted by capsid protein hexamer subunits. The core is disassembled soon after virion entry. Host restriction factors such as TRIM5-alpha or TRIMCyp bind retroviral capsids and cause premature capsid disassembly, leading to blocks in reverse transcription. Capsid restriction by TRIM5 is one of the factors which restricts HIV-1 to the human species. Host PIN1 apparently facilitates the virion uncoating. On the other hand, interactions with PDZD8 or CYPA stabilize the capsid. Its function is as follows. Encapsulates and protects viral dimeric unspliced genomic RNA (gRNA). Binds these RNAs through its zinc fingers. Acts as a nucleic acid chaperone which is involved in rearangement of nucleic acid secondary structure during gRNA retrotranscription. Also facilitates template switch leading to recombination. As part of the polyprotein, participates in gRNA dimerization, packaging, tRNA incorporation and virion assembly. Aspartyl protease that mediates proteolytic cleavages of Gag and Gag-Pol polyproteins during or shortly after the release of the virion from the plasma membrane. Cleavages take place as an ordered, step-wise cascade to yield mature proteins. This process is called maturation. Displays maximal activity during the budding process just prior to particle release from the cell. Also cleaves Nef and Vif, probably concomitantly with viral structural proteins on maturation of virus particles. Hydrolyzes host EIF4GI and PABP1 in order to shut off the capped cellular mRNA translation. The resulting inhibition of cellular protein synthesis serves to ensure maximal viral gene expression and to evade host immune response. Also mediates cleavage of host YTHDF3. Mediates cleavage of host CARD8, thereby activating the CARD8 inflammasome, leading to the clearance of latent HIV-1 in patient CD4(+) T-cells after viral reactivation; in contrast, HIV-1 can evade CARD8-sensing when its protease remains inactive in infected cells prior to viral budding. Functionally, multifunctional enzyme that converts the viral RNA genome into dsDNA in the cytoplasm, shortly after virus entry into the cell. This enzyme displays a DNA polymerase activity that can copy either DNA or RNA templates, and a ribonuclease H (RNase H) activity that cleaves the RNA strand of RNA-DNA heteroduplexes in a partially processive 3' to 5' endonucleasic mode. Conversion of viral genomic RNA into dsDNA requires many steps. A tRNA(3)-Lys binds to the primer-binding site (PBS) situated at the 5'-end of the viral RNA. RT uses the 3' end of the tRNA primer to perform a short round of RNA-dependent minus-strand DNA synthesis. The reading proceeds through the U5 region and ends after the repeated (R) region which is present at both ends of viral RNA. The portion of the RNA-DNA heteroduplex is digested by the RNase H, resulting in a ssDNA product attached to the tRNA primer. This ssDNA/tRNA hybridizes with the identical R region situated at the 3' end of viral RNA. This template exchange, known as minus-strand DNA strong stop transfer, can be either intra- or intermolecular. RT uses the 3' end of this newly synthesized short ssDNA to perform the RNA-dependent minus-strand DNA synthesis of the whole template. RNase H digests the RNA template except for two polypurine tracts (PPTs) situated at the 5'-end and near the center of the genome. It is not clear if both polymerase and RNase H activities are simultaneous. RNase H probably can proceed both in a polymerase-dependent (RNA cut into small fragments by the same RT performing DNA synthesis) and a polymerase-independent mode (cleavage of remaining RNA fragments by free RTs). Secondly, RT performs DNA-directed plus-strand DNA synthesis using the PPTs that have not been removed by RNase H as primers. PPTs and tRNA primers are then removed by RNase H. The 3' and 5' ssDNA PBS regions hybridize to form a circular dsDNA intermediate. Strand displacement synthesis by RT to the PBS and PPT ends produces a blunt ended, linear dsDNA copy of the viral genome that includes long terminal repeats (LTRs) at both ends. In terms of biological role, catalyzes viral DNA integration into the host chromosome, by performing a series of DNA cutting and joining reactions. This enzyme activity takes place after virion entry into a cell and reverse transcription of the RNA genome in dsDNA. The first step in the integration process is 3' processing. This step requires a complex comprising the viral genome, matrix protein, Vpr and integrase. This complex is called the pre-integration complex (PIC). The integrase protein removes 2 nucleotides from each 3' end of the viral DNA, leaving recessed CA OH's at the 3' ends. In the second step, the PIC enters cell nucleus. This process is mediated through integrase and Vpr proteins, and allows the virus to infect a non dividing cell. This ability to enter the nucleus is specific of lentiviruses, other retroviruses cannot and rely on cell division to access cell chromosomes. In the third step, termed strand transfer, the integrase protein joins the previously processed 3' ends to the 5' ends of strands of target cellular DNA at the site of integration. The 5'-ends are produced by integrase-catalyzed staggered cuts, 5 bp apart. A Y-shaped, gapped, recombination intermediate results, with the 5'-ends of the viral DNA strands and the 3' ends of target DNA strands remaining unjoined, flanking a gap of 5 bp. The last step is viral DNA integration into host chromosome. This involves host DNA repair synthesis in which the 5 bp gaps between the unjoined strands are filled in and then ligated. Since this process occurs at both cuts flanking the HIV genome, a 5 bp duplication of host DNA is produced at the ends of HIV-1 integration. Alternatively, Integrase may catalyze the excision of viral DNA just after strand transfer, this is termed disintegration. The sequence is that of Gag-Pol polyprotein (gag-pol) from Human immunodeficiency virus type 1 group M subtype G (isolate SE6165) (HIV-1).